A 739-amino-acid chain; its full sequence is Polyribonucleotide nucleotidyltransferase (739 aa).

Mg(2+)-binding residues include Asp-487 and Asp-493. One can recognise a KH domain in the interval 554–613 (PRIETMQIPTDKIRDVIGTGGKVIREIVEKTGAKINIEDTGVVKIASADGKAIKAAYNWI). Positions 623–691 (GVIYDGTIVK…DRGKIRLSMK (69 aa)) constitute an S1 motif domain. The disordered stretch occupies residues 694-739 (DQQTGEDITDKIKAQRDAERAERGDEPREPREGGRHRGERRREAGE). Residues 701–739 (ITDKIKAQRDAERAERGDEPREPREGGRHRGERRREAGE) are compositionally biased toward basic and acidic residues.

Belongs to the polyribonucleotide nucleotidyltransferase family. It depends on Mg(2+) as a cofactor.

It localises to the cytoplasm. The enzyme catalyses RNA(n+1) + phosphate = RNA(n) + a ribonucleoside 5'-diphosphate. Its function is as follows. Involved in mRNA degradation. Catalyzes the phosphorolysis of single-stranded polyribonucleotides processively in the 3'- to 5'-direction. The polypeptide is Polyribonucleotide nucleotidyltransferase (Methylobacterium radiotolerans (strain ATCC 27329 / DSM 1819 / JCM 2831 / NBRC 15690 / NCIMB 10815 / 0-1)).